The primary structure comprises 445 residues: ATP synthase subunit b-delta (445 aa).

Positions 1-168 are ATP synthase subunit b; it reads MSIFIGQLIG…PSSAVLEAGA (168 aa). Residues 3-23 traverse the membrane as a helical segment; sequence IFIGQLIGFAVIVFILVKWVV. Residues 169–445 form an ATP synthase subunit delta region; the sequence is SLNLRAASRE…LAAARTGLPD (277 aa).

It in the N-terminal section; belongs to the ATPase B chain family. The protein in the C-terminal section; belongs to the ATPase delta chain family. F-type ATPases have 2 components, F(1) - the catalytic core - and F(0) - the membrane proton channel. F(1) has five subunits: alpha(3), beta(3), gamma(1), delta(1), epsilon(1). F(0) has three main subunits: a(1), b(2) and c(10-14). The alpha and beta chains form an alternating ring which encloses part of the gamma chain. F(1) is attached to F(0) by a central stalk formed by the gamma and epsilon chains, while a peripheral stalk is formed by the delta and b chains.

The protein resides in the cell membrane. Functionally, f(1)F(0) ATP synthase produces ATP from ADP in the presence of a proton or sodium gradient. F-type ATPases consist of two structural domains, F(1) containing the extramembraneous catalytic core and F(0) containing the membrane proton channel, linked together by a central stalk and a peripheral stalk. During catalysis, ATP synthesis in the catalytic domain of F(1) is coupled via a rotary mechanism of the central stalk subunits to proton translocation. This fusion protein includes a component of the F(0) channel (subunit b) and of the F(1) subunit (subunit delta). Two copies of subunit b and one of delta together form the peripheral 'stator' stalk which links F(1) to F(0). This is ATP synthase subunit b-delta (atpFH) from Mycolicibacterium vanbaalenii (strain DSM 7251 / JCM 13017 / BCRC 16820 / KCTC 9966 / NRRL B-24157 / PYR-1) (Mycobacterium vanbaalenii).